The following is a 207-amino-acid chain: Histone H1 (207 aa).

Residues 1-15 show a composition bias toward low complexity; the sequence is MAEVAPAPAAAAPAK. Disordered stretches follow at residues 1–28 and 105–207; these read MAEV…PKKA and EAKK…PKKK. Position 2 is an N-acetylalanine (Ala2). A compositionally biased stretch (basic residues) spans 16 to 27; the sequence is APKKKAAAKPKK. One can recognise an H15 domain in the interval 28–101; sequence AGPSVGELIV…GASGSFKLNK (74 aa). Basic residues-rich tracts occupy residues 117 to 168 and 175 to 207; these read KAKK…KVKK and KAAK…PKKK.

This sequence belongs to the histone H1/H5 family. Oncorhyncin II is expressed in skin.

It localises to the nucleus. It is found in the chromosome. The protein resides in the secreted. In terms of biological role, histones H1 are necessary for the condensation of nucleosome chains into higher-order structures. Oncorhyncin II has antibacterial activity against Gram-positive and Gram-negative bacteria at submicromolar concentrations. Potentially important role in mucosal defense. The polypeptide is Histone H1 (Oncorhynchus mykiss (Rainbow trout)).